A 186-amino-acid polypeptide reads, in one-letter code: MDLKVLREEARSILIDVVERSAIKKGQLFVLGLSSSEVLGGRIGQHSSLEVGEVIVKVVLEELSSRGIHLAVQGCEHINRALVLEESVAEEYQLELVNVLPSLHAGGSGQLAAFKYMKQPVEVEAIAAHAGLDIGDTSIGMHVKRVQVPLVPIQRELGGAHVTALASRPKLIGGVRARYQPDPIRK.

Belongs to the UPF0340 family.

This chain is UPF0340 protein SZO_02480, found in Streptococcus equi subsp. zooepidemicus (strain H70).